The sequence spans 547 residues: Chaperonin GroEL (547 aa).

ATP is bound by residues 30–33, Lys51, 87–91, Gly415, 479–481, and Asp495; these read TLGP, DGTTT, and NAA.

Belongs to the chaperonin (HSP60) family. In terms of assembly, forms a cylinder of 14 subunits composed of two heptameric rings stacked back-to-back. Interacts with the co-chaperonin GroES.

Its subcellular location is the cytoplasm. It carries out the reaction ATP + H2O + a folded polypeptide = ADP + phosphate + an unfolded polypeptide.. Together with its co-chaperonin GroES, plays an essential role in assisting protein folding. The GroEL-GroES system forms a nano-cage that allows encapsulation of the non-native substrate proteins and provides a physical environment optimized to promote and accelerate protein folding. This chain is Chaperonin GroEL, found in Pseudomonas savastanoi pv. phaseolicola (strain 1448A / Race 6) (Pseudomonas syringae pv. phaseolicola (strain 1448A / Race 6)).